The following is a 277-amino-acid chain: Uridine phosphorylase (277 aa).

The protein belongs to the PNP/UDP phosphorylase family.

It is found in the cytoplasm. The catalysed reaction is uridine + phosphate = alpha-D-ribose 1-phosphate + uracil. It functions in the pathway pyrimidine metabolism; UMP biosynthesis via salvage pathway; uracil from uridine (phosphorylase route): step 1/1. Catalyzes the reversible phosphorylytic cleavage of uridine to uracil and ribose-1-phosphate. The protein is Uridine phosphorylase of Thermococcus kodakarensis (strain ATCC BAA-918 / JCM 12380 / KOD1) (Pyrococcus kodakaraensis (strain KOD1)).